A 528-amino-acid polypeptide reads, in one-letter code: Proteinaceous RNase P 2 (528 aa).

Residues 1-16 (MAASDQHRSRRHDESS) are compositionally biased toward basic and acidic residues. The interval 1–28 (MAASDQHRSRRHDESSSRPNKKKKVSRN) is disordered. PPR repeat units lie at residues 29–64 (PETNLLFNLNSCSKSKDLSAALALYDAAITSSEVRL), 72–107 (LLYLCSASITDISLQYLAIDRGFEIFDRMVSSGISP), 108–142 (NEASVTSVARLAAAKGNGDYAFKVVKEFVSVGGVS), and 145–179 (RLRTYAPALLCFCEKLEAEKGYEVEEHMEAAGIAL). One can recognise a PRORP domain in the interval 275 to 511 (VSSTGRCLSC…NEESSRTWMC (237 aa)). Zn(2+) contacts are provided by Cys281 and Cys284. Asp343, Asp421, Asp422, and Asp440 together coordinate Mg(2+). His494 and Cys511 together coordinate Zn(2+).

The protein belongs to the PPR family. P subfamily. As to quaternary structure, monomer; forms dimers in crystallo but monomers in solution. Mg(2+) serves as cofactor.

The protein resides in the nucleus. The enzyme catalyses Endonucleolytic cleavage of RNA, removing 5'-extranucleotides from tRNA precursor.. In terms of biological role, endonuclease RNase P responsible for the 5' maturation of tRNA precursors. Preferentially binds precursor tRNAs containing short 5' leaders and 3' trailers. Also involved in the maturation of mRNA and small nucleolar RNA (snoRNA). This Arabidopsis thaliana (Mouse-ear cress) protein is Proteinaceous RNase P 2 (PRORP2).